The sequence spans 156 residues: Protein LlR18A (156 aa).

Positions 8 and 28 each coordinate trans-zeatin. Positions 32 and 38 each coordinate Ca(2+). 3 residues coordinate trans-zeatin: Lys-54, Asp-133, and Lys-136.

The protein belongs to the BetVI family. Expressed constitutively in roots.

It is found in the cytoplasm. Its subcellular location is the cytosol. Its function is as follows. Class II ribonuclease (RNase). Binds to cytokinins. Interacts with melatonin. The chain is Protein LlR18A (LLR18A) from Lupinus luteus (European yellow lupine).